Consider the following 240-residue polypeptide: Purine nucleoside phosphorylase RC0672 (240 aa).

Zn(2+) contacts are provided by His-60, Cys-96, and His-113.

This sequence belongs to the purine nucleoside phosphorylase YfiH/LACC1 family. As to quaternary structure, homodimer. It depends on Cu(2+) as a cofactor. Requires Zn(2+) as cofactor.

The enzyme catalyses adenosine + phosphate = alpha-D-ribose 1-phosphate + adenine. The catalysed reaction is S-methyl-5'-thioadenosine + phosphate = 5-(methylsulfanyl)-alpha-D-ribose 1-phosphate + adenine. It carries out the reaction inosine + phosphate = alpha-D-ribose 1-phosphate + hypoxanthine. It catalyses the reaction adenosine + H2O + H(+) = inosine + NH4(+). Its function is as follows. Purine nucleoside enzyme that catalyzes the phosphorolysis of adenosine and inosine nucleosides, yielding D-ribose 1-phosphate and the respective free bases, adenine and hypoxanthine. Also catalyzes the phosphorolysis of S-methyl-5'-thioadenosine into adenine and S-methyl-5-thio-alpha-D-ribose 1-phosphate. Also has adenosine deaminase activity. The chain is Purine nucleoside phosphorylase RC0672 from Rickettsia conorii (strain ATCC VR-613 / Malish 7).